A 607-amino-acid polypeptide reads, in one-letter code: Aspartate--tRNA(Asp/Asn) ligase (607 aa).

Glu194 serves as a coordination point for L-aspartate. The tract at residues 218-221 (QLFK) is aspartate. An L-aspartate-binding site is contributed by Arg240. ATP is bound by residues 240-242 (RDE) and Gln249. His468 provides a ligand contact to L-aspartate. Glu502 contributes to the ATP binding site. Arg509 provides a ligand contact to L-aspartate. 554-557 (GLDR) is a binding site for ATP.

The protein belongs to the class-II aminoacyl-tRNA synthetase family. Type 1 subfamily. Homodimer.

It localises to the cytoplasm. The catalysed reaction is tRNA(Asx) + L-aspartate + ATP = L-aspartyl-tRNA(Asx) + AMP + diphosphate. Aspartyl-tRNA synthetase with relaxed tRNA specificity since it is able to aspartylate not only its cognate tRNA(Asp) but also tRNA(Asn). Reaction proceeds in two steps: L-aspartate is first activated by ATP to form Asp-AMP and then transferred to the acceptor end of tRNA(Asp/Asn). This Desulfotalea psychrophila (strain LSv54 / DSM 12343) protein is Aspartate--tRNA(Asp/Asn) ligase.